The following is a 476-amino-acid chain: Probable rhodanese domain-containing dual specificity protein phosphatase (476 aa).

One can recognise a Rhodanese domain in the interval 32-190 (IGSSKIIIDL…FQKDYSFMCN (159 aa)). The region spanning 208–350 (YPSEIIKDFL…LKDYQQHLTL (143 aa)) is the Tyrosine-protein phosphatase domain. Cys-294 acts as the Phosphocysteine intermediate in catalysis. A compositionally biased stretch (low complexity) spans 425-436 (KTTTSSTTINNK). Residues 425–476 (KTTTSSTTINNKGQQQDKAQEEKDSIFSYADKQEKMTHPTLHSPIELPQSSL) are disordered. Positions 442–461 (KAQEEKDSIFSYADKQEKMT) are enriched in basic and acidic residues.

This sequence belongs to the protein-tyrosine phosphatase family. Non-receptor class dual specificity subfamily.

The enzyme catalyses O-phospho-L-tyrosyl-[protein] + H2O = L-tyrosyl-[protein] + phosphate. It carries out the reaction O-phospho-L-seryl-[protein] + H2O = L-seryl-[protein] + phosphate. The catalysed reaction is O-phospho-L-threonyl-[protein] + H2O = L-threonyl-[protein] + phosphate. Its function is as follows. Has a dual specificity toward Ser/Thr and Tyr-containing proteins. The chain is Probable rhodanese domain-containing dual specificity protein phosphatase from Dictyostelium discoideum (Social amoeba).